The chain runs to 696 residues: Polyribonucleotide nucleotidyltransferase (696 aa).

Mg(2+) contacts are provided by aspartate 483 and aspartate 489. The 60-residue stretch at 550–609 (PRITTIWVKVDKIRDVIGSGGKNIRSVTEATGVSIDIDDTGKINIASTNKEACDLAIKMI) folds into the KH domain. An S1 motif domain is found at 619-687 (GKLYMGTVKK…KQGKIKLSRK (69 aa)).

It belongs to the polyribonucleotide nucleotidyltransferase family. It depends on Mg(2+) as a cofactor.

The protein localises to the cytoplasm. It catalyses the reaction RNA(n+1) + phosphate = RNA(n) + a ribonucleoside 5'-diphosphate. Involved in mRNA degradation. Catalyzes the phosphorolysis of single-stranded polyribonucleotides processively in the 3'- to 5'-direction. This is Polyribonucleotide nucleotidyltransferase from Citrifermentans bemidjiense (strain ATCC BAA-1014 / DSM 16622 / JCM 12645 / Bem) (Geobacter bemidjiensis).